The chain runs to 485 residues: Glutamyl-tRNA(Gln) amidotransferase subunit A (485 aa).

Catalysis depends on charge relay system residues Lys78 and Ser153. The Acyl-ester intermediate role is filled by Ser177.

Belongs to the amidase family. GatA subfamily. Heterotrimer of A, B and C subunits.

The enzyme catalyses L-glutamyl-tRNA(Gln) + L-glutamine + ATP + H2O = L-glutaminyl-tRNA(Gln) + L-glutamate + ADP + phosphate + H(+). Allows the formation of correctly charged Gln-tRNA(Gln) through the transamidation of misacylated Glu-tRNA(Gln) in organisms which lack glutaminyl-tRNA synthetase. The reaction takes place in the presence of glutamine and ATP through an activated gamma-phospho-Glu-tRNA(Gln). This chain is Glutamyl-tRNA(Gln) amidotransferase subunit A, found in Bacillus cytotoxicus (strain DSM 22905 / CIP 110041 / 391-98 / NVH 391-98).